The following is a 394-amino-acid chain: MSKEKFERTKPHVNVGTIGHVDHGKTTLTAAITTVLAKTYGGNARAFDQIDNAPEEKARGITISTSHVEYDTPSRHYAHVDCPGHADYVKNMITGAAQMDGAILVVAATDGPMPQTREHILLGRQVGVPYIIVFLNKCDMVDDEELLELVEMEVRELLSQYDFPGDDTPVIRGSALKALEGDAEWEAKIIELAEALDSYIPEPERAIDQPFLLPIEDVFSISGRGTVVTGRVERGIVKVGEEVEIVGIKDTTKTTCTGVEMFRKLLDEGRAGENVGVLLRGTKRDEIERGQVLAKPGSIKPHTTFESEVYILSKDEGGRHTPFFKGYRPQFYFRTTDVTGTIELPEGVEMVMPGDNIQMKVTLIAPIAMDQGLRFAIREGGRTVGAGVVAKVIA.

The tr-type G domain occupies Lys10–Glu204. The G1 stretch occupies residues Gly19–Thr26. GTP is bound at residue Gly19 to Thr26. Thr26 contributes to the Mg(2+) binding site. Residues Gly60 to Ser64 form a G2 region. The G3 stretch occupies residues Asp81–Gly84. Residues Asp81 to His85 and Asn136 to Asp139 contribute to the GTP site. The tract at residues Asn136–Asp139 is G4. Positions Ser174–Leu176 are G5.

Belongs to the TRAFAC class translation factor GTPase superfamily. Classic translation factor GTPase family. EF-Tu/EF-1A subfamily. In terms of assembly, monomer.

It is found in the cytoplasm. The catalysed reaction is GTP + H2O = GDP + phosphate + H(+). In terms of biological role, GTP hydrolase that promotes the GTP-dependent binding of aminoacyl-tRNA to the A-site of ribosomes during protein biosynthesis. The protein is Elongation factor Tu 2 of Photorhabdus laumondii subsp. laumondii (strain DSM 15139 / CIP 105565 / TT01) (Photorhabdus luminescens subsp. laumondii).